Consider the following 538-residue polypeptide: MDLEVKGVAATSRSQIQPFFGRKKPLQQRWTSESWTNQNSCPPVVPRLDLGSLVDSDDEDNFSYIPLSTANLPNSSSTLGWVTPCQTPYTQYHLNKLDQNIIPENLPAPTDKCKLKYQQCKTEIKEGYKQYSQRNAENTKSNVTHKQSPRNKIDEKCVQDEEANTDDLTTLDRKAILQQGYADNSCDKQQRARKLDAEIVAAEKKKQIVAEQVMIDHLSRAVISDPEQNLAIEQKESDHILPDSKMTPLRFRKRTLHETKIRTHSTLTENVLSHKLQFDGRIVSRNGRDACRELIGFFFTHDQSLTIYEYRQFGKNRTNVLPFIQKSIYSHQCGRRKGKQYRLGDFYVGATLTFLSSDHLSLPESIKENTLLKLRITNIDQIALDSLKTASMEQEDDIIIQETNDRLVFKAIQDVLKEKLHKRGVRILTGLGKYFQQLDKEGNGLLDKADFKQALKVFHLEVSEKDFESAWLILNDNGNGKVDYGEFKRGIIGEMNEYRKSYVRKAFMKLDFNKSGSVPIINIRKCYCAKKHSQVISG.

Polar residues predominate over residues 134–146 (RNAENTKSNVTHK). Residues 134-154 (RNAENTKSNVTHKQSPRNKID) form a disordered region. EF-hand domains are found at residues 426 to 461 (RILT…FHLE), 462 to 497 (VSEK…EMNE), and 498 to 533 (YRKS…KKHS). 12 residues coordinate Ca(2+): D439, N443, D450, N477, N479, K481, E486, D511, N513, S515, S517, and N522.

In terms of tissue distribution, abundantly expressed in many tissues. Expressed in brain, colon, heart, kidney, liver, lung, liver, pancreas, placenta, skeletal muscle, testis and thymus. Highest expression in colon, testis, lung, placenta and brain.

The chain is Calcyphosin-2 from Homo sapiens (Human).